The primary structure comprises 163 residues: Pheromone-binding protein (163 aa).

The N-terminal stretch at 1 to 22 is a signal peptide; that stretch reads MMSVRLMLVVAVWLCLRVDASQ. 3 disulfides stabilise this stretch: C39-C74, C70-C129, and C117-C138.

Belongs to the PBP/GOBP family. In terms of tissue distribution, antenna.

Functionally, this major soluble protein in olfactory sensilla of male moths might serve to solubilize the extremely hydrophobic pheromone molecules and to transport pheromone through the aqueous lymph to receptors located on olfactory cilia. This is Pheromone-binding protein from Heliothis virescens (Tobacco budworm moth).